The chain runs to 336 residues: Holliday junction branch migration complex subunit RuvB (336 aa).

The segment at 1–175 (MEKYSFESVQ…FGMSFRLQFY (175 aa)) is large ATPase domain (RuvB-L). ATP contacts are provided by residues Leu14, Arg15, Gly56, Lys59, Thr60, Thr61, 122–124 (EDF), Arg165, Tyr175, and Arg212. Residue Thr60 coordinates Mg(2+). A small ATPAse domain (RuvB-S) region spans residues 176-253 (EPKELSAIVI…CVRYALNELG (78 aa)). Residues 256 to 336 (ELGFDELDLR…IPFLEQKGLF (81 aa)) are head domain (RuvB-H). Positions 310 and 315 each coordinate DNA.

The protein belongs to the RuvB family. In terms of assembly, homohexamer. Forms an RuvA(8)-RuvB(12)-Holliday junction (HJ) complex. HJ DNA is sandwiched between 2 RuvA tetramers; dsDNA enters through RuvA and exits via RuvB. An RuvB hexamer assembles on each DNA strand where it exits the tetramer. Each RuvB hexamer is contacted by two RuvA subunits (via domain III) on 2 adjacent RuvB subunits; this complex drives branch migration. In the full resolvosome a probable DNA-RuvA(4)-RuvB(12)-RuvC(2) complex forms which resolves the HJ.

The protein resides in the cytoplasm. It catalyses the reaction ATP + H2O = ADP + phosphate + H(+). Its function is as follows. The RuvA-RuvB-RuvC complex processes Holliday junction (HJ) DNA during genetic recombination and DNA repair, while the RuvA-RuvB complex plays an important role in the rescue of blocked DNA replication forks via replication fork reversal (RFR). RuvA specifically binds to HJ cruciform DNA, conferring on it an open structure. The RuvB hexamer acts as an ATP-dependent pump, pulling dsDNA into and through the RuvAB complex. RuvB forms 2 homohexamers on either side of HJ DNA bound by 1 or 2 RuvA tetramers; 4 subunits per hexamer contact DNA at a time. Coordinated motions by a converter formed by DNA-disengaged RuvB subunits stimulates ATP hydrolysis and nucleotide exchange. Immobilization of the converter enables RuvB to convert the ATP-contained energy into a lever motion, pulling 2 nucleotides of DNA out of the RuvA tetramer per ATP hydrolyzed, thus driving DNA branch migration. The RuvB motors rotate together with the DNA substrate, which together with the progressing nucleotide cycle form the mechanistic basis for DNA recombination by continuous HJ branch migration. Branch migration allows RuvC to scan DNA until it finds its consensus sequence, where it cleaves and resolves cruciform DNA. The protein is Holliday junction branch migration complex subunit RuvB of Helicobacter hepaticus (strain ATCC 51449 / 3B1).